The following is a 351-amino-acid chain: 3-dehydroquinate synthase (351 aa).

Residues 60 to 65 (DGEEYK), 94 to 98 (GVISD), 118 to 119 (TT), lysine 131, lysine 140, and 158 to 161 (FLKT) each bind NAD(+). Residues glutamate 173, histidine 239, and histidine 256 each contribute to the Zn(2+) site.

The protein belongs to the sugar phosphate cyclases superfamily. Dehydroquinate synthase family. NAD(+) serves as cofactor. It depends on Co(2+) as a cofactor. Zn(2+) is required as a cofactor.

Its subcellular location is the cytoplasm. The catalysed reaction is 7-phospho-2-dehydro-3-deoxy-D-arabino-heptonate = 3-dehydroquinate + phosphate. It participates in metabolic intermediate biosynthesis; chorismate biosynthesis; chorismate from D-erythrose 4-phosphate and phosphoenolpyruvate: step 2/7. Functionally, catalyzes the conversion of 3-deoxy-D-arabino-heptulosonate 7-phosphate (DAHP) to dehydroquinate (DHQ). The chain is 3-dehydroquinate synthase from Campylobacter jejuni subsp. jejuni serotype O:2 (strain ATCC 700819 / NCTC 11168).